The primary structure comprises 1474 residues: SH3 and multiple ankyrin repeat domains protein 2 (1474 aa).

A compositionally biased stretch (polar residues) spans 66 to 76 (LSPQLLQQTPS). The interval 66–125 (LSPQLLQQTPSKPDGATKSLGSYAPGPRSRSPSLNRLGGAGEDGKRPQPPHWHVGSPFTP) is disordered. The 60-residue stretch at 148–207 (VPGRLFVAIKPYQPQVDGEIPLHRGDRVKVLSIGEGGFWEGSARGHIGWFPAECVEEVQC) folds into the SH3 domain. The residue at position 162 (Q162) is a Phosphoserine. Residues 248–342 (TVVLQKKDNE…HLVLKVVTVT (95 aa)) enclose the PDZ domain. A Phosphoserine modification is found at S373. The interval 392–413 (RKKKDKPEEIVPASKPSRTAEN) is disordered. S457 is modified (phosphoserine). The residue at position 486 (T486) is a Phosphothreonine. Positions 504–534 (LSMPDTSEDIPPPPQSVPPSPPPPSPTTYNC) are disordered. Over residues 513–529 (IPPPPQSVPPSPPPPSP) the composition is skewed to pro residues. At S586 the chain carries Phosphoserine. 3 disordered regions span residues 659–920 (TIIV…ADDK), 947–995 (PVAG…PAAA), and 1057–1153 (PALA…ESMD). Positions 666 to 678 (STSSSGKSSQGSS) are enriched in low complexity. Basic and acidic residues predominate over residues 711–722 (VRDREKRLEARR). S724 carries the phosphoserine modification. Positions 783-795 (LGGGEAGAQGEAG) are enriched in gly residues. Composition is skewed to low complexity over residues 811–823 (PAAA…PASP) and 833–846 (RLLD…LALS). Basic and acidic residues-rich tracts occupy residues 847–868 (ARDR…KADL) and 899–920 (RRQE…ADDK). A Phosphothreonine modification is found at T903. Over residues 1075–1085 (SLNSSQPANST) the composition is skewed to polar residues. The segment covering 1119–1130 (VDSRSSSDHHLE) has biased composition (basic and acidic residues). Residues 1131–1151 (TTSTISTVSSISTLSSEGGES) show a composition bias toward low complexity. Residues 1169-1175 (PPVPPKP) carry the SH3-binding motif. 2 disordered regions span residues 1195-1216 (EDTD…SAQA) and 1260-1401 (NRGK…ISNK). Residues 1202–1212 (IPPPAPPPPPG) are compositionally biased toward pro residues. Positions 1291–1305 (STVSGTRSTTVTFTV) are enriched in low complexity. O-linked (GlcNAc) threonine glycosylation occurs at T1292. The span at 1307–1317 (PGTSQPITLQS) shows a compositional bias: polar residues. Phosphoserine is present on residues S1334 and S1338. Composition is skewed to low complexity over residues 1352–1363 (SAAAASPSPTLS) and 1385–1399 (RSRS…QPIS). The SAM domain maps to 1411–1474 (WTKPDVADWL…ERALKQLLDR (64 aa)).

This sequence belongs to the SHANK family. In terms of assembly, is part of a complex with DLG4/PSD-95 and DLGAP1/GKAP. Interacts with CTTN/cortactin SH3 domain, DLGAP1/GKAP and alpha-latrotoxin receptor 1. Interacts with DNM2, DBNL, GRID2, BAIAP2, SLC9A3, PLCB3 and CFTR. Interacts with ABI1 (via SH3 domain). Interacts (via proline-rich region) with PDE4D isoform 5 (via N-terminal region). Interacts with PDE4D isoform 33, isoform 4, isoform 7, isoform 8 and isoform 9 but not isoform 32 and isoform 6. Interacts weakly with PDE4D isoform 31. Interacts with ABI1. Expressed in epithelial cells (at protein level). All isoforms except isoform 7 are expressed predominantly in brain, with highest levels in olfactory bulb, cerebral cortex, cerebellum, central gray matter and hippocampus. Moderate levels of expression are seen in the caudate putamen, thalamic nuclei and brain stem. In cerebellum primarily expressed in Purkinje cells. Isoform 7 is not expressed in brain but expressed in liver, cholangiocytes and thymus. Isoform 7 is present in pancreas, colonic mucosa and thymocytes (at protein level).

The protein resides in the apical cell membrane. Its subcellular location is the cytoplasm. It localises to the synapse. The protein localises to the postsynaptic density. It is found in the cell projection. The protein resides in the growth cone. Its subcellular location is the dendritic spine. Its function is as follows. Seems to be an adapter protein in the postsynaptic density (PSD) of excitatory synapses that interconnects receptors of the postsynaptic membrane including NMDA-type and metabotropic glutamate receptors, and the actin-based cytoskeleton. May play a role in the structural and functional organization of the dendritic spine and synaptic junction. This is SH3 and multiple ankyrin repeat domains protein 2 (Shank2) from Rattus norvegicus (Rat).